Reading from the N-terminus, the 436-residue chain is ATP-dependent RNA helicase RhlB (436 aa).

A Q motif motif is present at residues 9-37; the sequence is QKFADFPLHKEVHQALNEAGFEFCTPIQA. The 180-residue stretch at 40–219 folds into the Helicase ATP-binding domain; that stretch reads LPILLEKKDI…YDHMNEPEKV (180 aa). 53–60 lines the ATP pocket; it reads AQTGTGKT. Positions 165-168 match the DEAD box motif; the sequence is DEAD. One can recognise a Helicase C-terminal domain in the interval 243-390; that stretch reads KMPLLLSLLE…VTSYDSDALL (148 aa). The interval 392–436 is disordered; it reads DIPPPVRIHRKPSTHTRNTRDRGASRPQGGQRSGPRRHDRTRRHS. The segment covering 425–436 has biased composition (basic residues); that stretch reads GPRRHDRTRRHS.

The protein belongs to the DEAD box helicase family. RhlB subfamily. As to quaternary structure, component of the RNA degradosome, which is a multiprotein complex involved in RNA processing and mRNA degradation.

The protein resides in the cytoplasm. It catalyses the reaction ATP + H2O = ADP + phosphate + H(+). DEAD-box RNA helicase involved in RNA degradation. Has RNA-dependent ATPase activity and unwinds double-stranded RNA. This chain is ATP-dependent RNA helicase RhlB, found in Shewanella halifaxensis (strain HAW-EB4).